An 80-amino-acid polypeptide reads, in one-letter code: Protein CEBPZOS (80 aa).

Residues Gly-15–Phe-31 form a helical membrane-spanning segment.

It localises to the mitochondrion membrane. This is Protein CEBPZOS from Mus musculus (Mouse).